Here is a 551-residue protein sequence, read N- to C-terminus: Glucose-6-phosphate isomerase (551 aa).

Catalysis depends on E352, which acts as the Proton donor. Residues H383 and K511 contribute to the active site.

It belongs to the GPI family.

It is found in the cytoplasm. It carries out the reaction alpha-D-glucose 6-phosphate = beta-D-fructose 6-phosphate. The protein operates within carbohydrate biosynthesis; gluconeogenesis. It participates in carbohydrate degradation; glycolysis; D-glyceraldehyde 3-phosphate and glycerone phosphate from D-glucose: step 2/4. Functionally, catalyzes the reversible isomerization of glucose-6-phosphate to fructose-6-phosphate. The protein is Glucose-6-phosphate isomerase of Chlorobium luteolum (strain DSM 273 / BCRC 81028 / 2530) (Pelodictyon luteolum).